The primary structure comprises 252 residues: ATP synthase subunit a (252 aa).

Transmembrane regions (helical) follow at residues 29–49, 87–107, 117–137, 146–166, 196–216, and 219–239; these read FTNV…FLFI, FFPL…IGLF, IMIT…CGFY, LFVP…IEVI, FIVS…LPLI, and VAIT…FTVL.

The protein belongs to the ATPase A chain family. F-type ATPases have 2 components, CF(1) - the catalytic core - and CF(0) - the membrane proton channel. CF(1) has five subunits: alpha(3), beta(3), gamma(1), delta(1), epsilon(1). CF(0) has three main subunits: a(1), b(2) and c(9-12). The alpha and beta chains form an alternating ring which encloses part of the gamma chain. CF(1) is attached to CF(0) by a central stalk formed by the gamma and epsilon chains, while a peripheral stalk is formed by the delta and b chains.

The protein localises to the cell inner membrane. In terms of biological role, key component of the proton channel; it plays a direct role in the translocation of protons across the membrane. This is ATP synthase subunit a from Bartonella bacilliformis (strain ATCC 35685 / KC583 / Herrer 020/F12,63).